A 98-amino-acid chain; its full sequence is NADH-ubiquinone oxidoreductase chain 4L (98 aa).

The next 3 membrane-spanning stretches (helical) occupy residues 1–21 (MTPT…GMLI), 29–49 (SLLC…LIAL), and 61–81 (IILL…LVSI).

This sequence belongs to the complex I subunit 4L family. Core subunit of respiratory chain NADH dehydrogenase (Complex I) which is composed of 45 different subunits.

The protein resides in the mitochondrion inner membrane. The catalysed reaction is a ubiquinone + NADH + 5 H(+)(in) = a ubiquinol + NAD(+) + 4 H(+)(out). Functionally, core subunit of the mitochondrial membrane respiratory chain NADH dehydrogenase (Complex I) which catalyzes electron transfer from NADH through the respiratory chain, using ubiquinone as an electron acceptor. Part of the enzyme membrane arm which is embedded in the lipid bilayer and involved in proton translocation. The chain is NADH-ubiquinone oxidoreductase chain 4L (MT-ND4L) from Macaca maura (Moor macaque).